The sequence spans 82 residues: Defensin-like protein 156 (82 aa).

Residues 1 to 27 (MAKISCSYFLVLMLVFSVFSLVEKTKG) form the signal peptide. Intrachain disulfides connect Cys31/Cys77, Cys41/Cys60, Cys46/Cys71, and Cys50/Cys73.

It belongs to the DEFL family. Expressed in flower buds, but not in stems, roots or rosette leaves.

It localises to the secreted. The chain is Defensin-like protein 156 (LCR21) from Arabidopsis thaliana (Mouse-ear cress).